The chain runs to 37 residues: MKIRASVRKICDKCRLIRRRGRIIVICSNPRHKQRQG.

Belongs to the bacterial ribosomal protein bL36 family.

Its subcellular location is the plastid. The protein resides in the chloroplast. This chain is Large ribosomal subunit protein bL36c, found in Coffea arabica (Arabian coffee).